The chain runs to 291 residues: Ribosomal RNA small subunit methyltransferase A (291 aa).

S-adenosyl-L-methionine contacts are provided by histidine 37, leucine 39, glycine 64, glutamate 85, aspartate 110, and asparagine 131.

The protein belongs to the class I-like SAM-binding methyltransferase superfamily. rRNA adenine N(6)-methyltransferase family. RsmA subfamily.

It is found in the cytoplasm. It carries out the reaction adenosine(1518)/adenosine(1519) in 16S rRNA + 4 S-adenosyl-L-methionine = N(6)-dimethyladenosine(1518)/N(6)-dimethyladenosine(1519) in 16S rRNA + 4 S-adenosyl-L-homocysteine + 4 H(+). In terms of biological role, specifically dimethylates two adjacent adenosines (A1518 and A1519) in the loop of a conserved hairpin near the 3'-end of 16S rRNA in the 30S particle. May play a critical role in biogenesis of 30S subunits. The polypeptide is Ribosomal RNA small subunit methyltransferase A (Dehalococcoides mccartyi (strain ATCC BAA-2266 / KCTC 15142 / 195) (Dehalococcoides ethenogenes (strain 195))).